A 222-amino-acid polypeptide reads, in one-letter code: MDGYALFYLVGALRDGSVYRYSRNYYVIWYSSNKDYLERVIVSKLRILGFHNVRVYQYKRGAYRVRISSKQLFHILVNQFEHPLSTSSRKTPWPTPQRVKDGPLALQIEYVKGFVDAEGSVIKSSKGVQVDVSQQIMEPLKFLAQVLEKVGVKVTGIYLGSDGVWRLRIASLASLRRFAHYIGFRHPCKSKKLNELLGRPLPGPSKLKGIGGGAPQGVEPAA.

Probably functions as a monomer. Mg(2+) serves as cofactor. Mn(2+) is required as a cofactor.

Functionally, endonuclease involved in 16S rRNA intron I-alpha homing. Recognizes the minimal target 5'-GCAAGGCTGAAACTTAAAGG-3'; generates 4 base 3' protruding ends 5'-AAAC-3' and 5'-GTTT-3'. The sequence is that of Homing endonuclease I-ApeI (apeI) from Aeropyrum pernix (strain ATCC 700893 / DSM 11879 / JCM 9820 / NBRC 100138 / K1).